The primary structure comprises 55 residues: Large ribosomal subunit protein bL32 (55 aa).

Residues 1-19 are compositionally biased toward basic residues; the sequence is MAVPKRRMSRANTHSRRSQ. The segment at 1 to 20 is disordered; the sequence is MAVPKRRMSRANTHSRRSQW.

The protein belongs to the bacterial ribosomal protein bL32 family.

This is Large ribosomal subunit protein bL32 from Corynebacterium jeikeium (strain K411).